Reading from the N-terminus, the 353-residue chain is Alanine racemase (353 aa).

Lys-33 acts as the Proton acceptor; specific for D-alanine in catalysis. Lys-33 bears the N6-(pyridoxal phosphate)lysine mark. Arg-129 contacts substrate. Tyr-250 acts as the Proton acceptor; specific for L-alanine in catalysis. Met-298 provides a ligand contact to substrate.

Belongs to the alanine racemase family. Pyridoxal 5'-phosphate serves as cofactor.

The enzyme catalyses L-alanine = D-alanine. Its pathway is amino-acid biosynthesis; D-alanine biosynthesis; D-alanine from L-alanine: step 1/1. Functionally, catalyzes the interconversion of L-alanine and D-alanine. May also act on other amino acids. This is Alanine racemase (alr) from Azoarcus sp. (strain BH72).